Reading from the N-terminus, the 98-residue chain is Pancreatic polypeptide prohormone (98 aa).

The N-terminal stretch at 1 to 29 (MAVAYYCLSLFLLSTWVALLLQPLQGAWG) is a signal peptide. Residue Y65 is modified to Tyrosine amide.

This sequence belongs to the NPY family. No icosapeptide-like peptide is cleaved from the C-terminal.

The protein resides in the secreted. Its function is as follows. Hormone secreted by pancreatic cells that acts as a regulator of pancreatic and gastrointestinal functions probably by signaling through the G protein-coupled receptor NPY4R2. In Rattus norvegicus (Rat), this protein is Pancreatic polypeptide prohormone (Ppy).